We begin with the raw amino-acid sequence, 660 residues long: Acetyl-coenzyme A synthetase (660 aa).

Residues 197–200 and Thr317 each bind CoA; that span reads RGGK. ATP contacts are provided by residues 397–399, 421–426, Asp512, and Arg528; these read GEP and DTWWQT. Ser536 is a CoA binding site. Position 539 (Arg539) interacts with ATP. Residues Val550, His552, and Val555 each coordinate Mg(2+). N6-acetyllysine is present on Lys625.

Belongs to the ATP-dependent AMP-binding enzyme family. The cofactor is Mg(2+). Post-translationally, acetylated. Deacetylation by the SIR2-homolog deacetylase activates the enzyme.

It carries out the reaction acetate + ATP + CoA = acetyl-CoA + AMP + diphosphate. Catalyzes the conversion of acetate into acetyl-CoA (AcCoA), an essential intermediate at the junction of anabolic and catabolic pathways. AcsA undergoes a two-step reaction. In the first half reaction, AcsA combines acetate with ATP to form acetyl-adenylate (AcAMP) intermediate. In the second half reaction, it can then transfer the acetyl group from AcAMP to the sulfhydryl group of CoA, forming the product AcCoA. This is Acetyl-coenzyme A synthetase from Burkholderia lata (strain ATCC 17760 / DSM 23089 / LMG 22485 / NCIMB 9086 / R18194 / 383).